A 317-amino-acid chain; its full sequence is MNNWNSITIKISREAEETISALLIEAGSAGVEINDSADYLNHEDQFGEVLPEIEQSELVEITAYYPENMPIVELKAEIEHKIANLADYFSLTGLSVTTNNLSETNWAEAWKKYFEPARITHDLTIVPSWTKDYLATGSEKLIRLDPGMAFGTGTHPTTKMSLYALEQVLRGGETLLDVGTGSGVLSVAATYLGAAEIFAYDIDEVAVRVALENIELNPGHEKIHVSANNLLEGIDKKADVIVANILADILVLMTDDAFRLVKEEGYLIMSGIIADKADMVIASAENAGFFLETRMIQGEWNCLIFKKTENREGVIGG.

S-adenosyl-L-methionine contacts are provided by threonine 158, glycine 179, aspartate 201, and asparagine 244.

This sequence belongs to the methyltransferase superfamily. PrmA family.

It is found in the cytoplasm. It carries out the reaction L-lysyl-[protein] + 3 S-adenosyl-L-methionine = N(6),N(6),N(6)-trimethyl-L-lysyl-[protein] + 3 S-adenosyl-L-homocysteine + 3 H(+). Methylates ribosomal protein L11. The sequence is that of Ribosomal protein L11 methyltransferase from Lactococcus lactis subsp. cremoris (strain MG1363).